The following is a 562-amino-acid chain: Serine/threonine-protein kinase dst3 (562 aa).

Positions 23-285 (FQIVEVVGSG…AQQLLSHPFI (263 aa)) constitute a Protein kinase domain. ATP-binding positions include 29–37 (VGSGSFGTV) and Lys-59. Residue Asp-154 is the Proton acceptor of the active site. Disordered regions lie at residues 316–339 (LEEQ…TRAS) and 366–562 (SIMR…NVNI). A compositionally biased stretch (polar residues) spans 322 to 339 (QRNSSGSKMVSSVPTRAS). Composition is skewed to low complexity over residues 421 to 431 (NNNNNNNNTTT), 442 to 454 (QQQQ…NNNK), and 476 to 494 (TTPT…TTKT). The segment covering 495–522 (GSSLNIKPTNNVNRSTISIGQQKSPLQS) has biased composition (polar residues). Positions 542–562 (EDEEDEEEFNHEDYEEINVNI) are enriched in acidic residues.

The protein belongs to the protein kinase superfamily. STE Ser/Thr protein kinase family. STE20 subfamily. Mg(2+) serves as cofactor.

It carries out the reaction L-seryl-[protein] + ATP = O-phospho-L-seryl-[protein] + ADP + H(+). The enzyme catalyses L-threonyl-[protein] + ATP = O-phospho-L-threonyl-[protein] + ADP + H(+). This Dictyostelium discoideum (Social amoeba) protein is Serine/threonine-protein kinase dst3.